We begin with the raw amino-acid sequence, 121 residues long: Large ribosomal subunit protein uL18 (121 aa).

It belongs to the universal ribosomal protein uL18 family. In terms of assembly, part of the 50S ribosomal subunit; part of the 5S rRNA/L5/L18/L25 subcomplex. Contacts the 5S and 23S rRNAs.

This is one of the proteins that bind and probably mediate the attachment of the 5S RNA into the large ribosomal subunit, where it forms part of the central protuberance. The polypeptide is Large ribosomal subunit protein uL18 (Anaplasma phagocytophilum (strain HZ)).